We begin with the raw amino-acid sequence, 221 residues long: MNKFSNTRIGFTCAVMAPRTLILTVGLLCMRIRSLLCSPAETTVTTAAVTSAHGPLCPLVFQGWAYAVYHQGDMALMTLDVYCCRQTSNNTVVAFSHHPADNTLLIEVGNNTRRHVDGISCQDHFRAQHQDCPAQTVHVRGVNESAFGLTHLQSCCLNEHSQLSERVAYHLKLRPATFGLETWAMYTVGILALGSFSSFYSQIARSLGVLPNDHHYALKKA.

An HLA-E-binding epitope region spans residues 15–23 (VMAPRTLIL).

The protein belongs to the HHV-5 UL40 protein family.

Functionally, plays a role in the protection against host NK-cell cytotoxicity by up-regulating the cell surface expression of HLA-E independent of TAP (HLA-E has an inhibitory effect on the cytotoxic activity of the NK cell). Also promotes cell surface expression of UL18, another viral protein involved in NK-cell evasion. The sequence is that of Protein UL40 (UL40) from Homo sapiens (Human).